The sequence spans 103 residues: UPF0473 protein SGO_2040 (103 aa).

Belongs to the UPF0473 family.

The sequence is that of UPF0473 protein SGO_2040 from Streptococcus gordonii (strain Challis / ATCC 35105 / BCRC 15272 / CH1 / DL1 / V288).